The primary structure comprises 157 residues: MNILMLTFIICGLLTQVTKGSFEPQKCWKNNIGHCRRRCLDTERYILLCRNKLSCCISLIISQEYTRRPAFPVIHLEDITFDYSDVDSFTGSPVSMLNDLITFDTTKFGETMTPETNTPETTMPPPETTTPETTMPPSETATSETMPPPSQRALTHN.

Positions 1–20 (MNILMLTFIICGLLTQVTKG) are cleaved as a signal peptide. Intrachain disulfides connect cysteine 27–cysteine 55, cysteine 35–cysteine 49, and cysteine 39–cysteine 56. The tract at residues 109–157 (GETMTPETNTPETTMPPPETTTPETTMPPSETATSETMPPPSQRALTHN) is disordered. 2 stretches are compositionally biased toward low complexity: residues 110–121 (ETMTPETNTPET) and 129–145 (TTPE…TSET).

It belongs to the beta-defensin family.

It localises to the secreted. Its function is as follows. Has antibacterial activity. This Pan troglodytes (Chimpanzee) protein is Beta-defensin 125 (DEFB125).